The chain runs to 682 residues: Glutamine--fructose-6-phosphate aminotransferase [isomerizing] 2 (682 aa).

The active-site For GATase activity is cysteine 2. Positions 2–288 constitute a Glutamine amidotransferase type-2 domain; the sequence is CGIFAYMNYR…DDDIAAVADG (287 aa). Position 244 is a phosphoserine (serine 244). SIS domains are found at residues 360–499 and 531–672; these read HLKE…DRIS and LALE…VDFP. Substrate-binding positions include 377 to 378, 422 to 424, threonine 427, and histidine 578; these read TS and SQS.

It carries out the reaction D-fructose 6-phosphate + L-glutamine = D-glucosamine 6-phosphate + L-glutamate. The protein operates within nucleotide-sugar biosynthesis; UDP-N-acetyl-alpha-D-glucosamine biosynthesis; alpha-D-glucosamine 6-phosphate from D-fructose 6-phosphate: step 1/1. In terms of biological role, controls the flux of glucose into the hexosamine pathway. Most likely involved in regulating the availability of precursors for N- and O-linked glycosylation of proteins. This Bos taurus (Bovine) protein is Glutamine--fructose-6-phosphate aminotransferase [isomerizing] 2 (GFPT2).